We begin with the raw amino-acid sequence, 428 residues long: tRNA dimethylallyltransferase (428 aa).

21-28 (GTTGVGKS) contacts ATP. Position 23–28 (23–28 (TGVGKS)) interacts with dimethylallyl diphosphate. Interaction with substrate tRNA regions lie at residues 46–49 (DSMQ) and 170–174 (RRVQR). The core aggregation region stretch occupies residues 199–207 (FDTLFLWLY). The interval 210-232 (PEPLFQRLDDRVDDMLERGALQE) is interaction with isopentenylpyrophosphate transferase. 2 interaction with substrate tRNA regions span residues 256-258 (QVI) and 284-302 (RMKT…WIKK). The segment at 373–409 (YTCNVCRNADGKNVVAIGEKYWKIHLGSRRHKSNLKR) adopts a Matrin-type zinc-finger fold. Residues C375, C378, H397, and H403 each contribute to the Zn(2+) site.

This sequence belongs to the IPP transferase family.

It is found in the cytoplasm. The protein localises to the mitochondrion. The protein resides in the nucleus. The catalysed reaction is adenosine(37) in tRNA + dimethylallyl diphosphate = N(6)-dimethylallyladenosine(37) in tRNA + diphosphate. In terms of biological role, catalyzes the transfer of a dimethylallyl group onto the adenine at position 37 in the anticodon loop on a specific subset of tRNAs both in the cytosol and the mitochondrion, leading to the formation of N6-(dimethylallyl)adenosine (i(6)A). This modification optimizes the codon:anticodon fit in the ribosome and promotes translational fidelity. Competes with the farnesyl pyrophosphate synthase ERG20 for the common substrate dimethylallyl diphosphate (DMAPP). The sequence is that of tRNA dimethylallyltransferase (MOD5) from Saccharomyces cerevisiae (strain ATCC 204508 / S288c) (Baker's yeast).